The following is a 337-amino-acid chain: MEGKNQTNISEFLLLGFSSWQQQQVLLFALFLCLYLTGLFGNLLILLAIGSDHCLHTPMYFFLANLSLVDLCLPSATVPKMLLNIQTQTQTISYPGCLAQMYFCMMFANMDNFLLTVMAYDRYVAICHPLHYSTIMALRLCASLVAAPWVIAILNPLLHTLMMAHLHFCSDNVIHHFFCDINSLLPLSCSDTSLNQLSVLATVGLIFVVPSVCILVSYILIVSAVMKVPSAQGKLKAFSTCGSHLALVILFYGAITGVYMSPLSNHSTEKDSAASVIFMVVAPVLNPFIYSLRNNELKGTLKKTLSRPGAVAHACNPSTLGGRGGWIMRSGDRDHPG.

The Extracellular portion of the chain corresponds to 1-25 (MEGKNQTNISEFLLLGFSSWQQQQV). 2 N-linked (GlcNAc...) asparagine glycosylation sites follow: Asn-5 and Asn-8. A helical membrane pass occupies residues 26 to 49 (LLFALFLCLYLTGLFGNLLILLAI). Topologically, residues 50 to 57 (GSDHCLHT) are cytoplasmic. A helical transmembrane segment spans residues 58 to 79 (PMYFFLANLSLVDLCLPSATVP). Residues 80–100 (KMLLNIQTQTQTISYPGCLAQ) lie on the Extracellular side of the membrane. A disulfide bridge connects residues Cys-97 and Cys-189. The chain crosses the membrane as a helical span at residues 101-120 (MYFCMMFANMDNFLLTVMAY). Over 121–139 (DRYVAICHPLHYSTIMALR) the chain is Cytoplasmic. The chain crosses the membrane as a helical span at residues 140–158 (LCASLVAAPWVIAILNPLL). At 159–196 (HTLMMAHLHFCSDNVIHHFFCDINSLLPLSCSDTSLNQ) the chain is on the extracellular side. The helical transmembrane segment at 197-219 (LSVLATVGLIFVVPSVCILVSYI) threads the bilayer. At 220-236 (LIVSAVMKVPSAQGKLK) the chain is on the cytoplasmic side. A helical membrane pass occupies residues 237-259 (AFSTCGSHLALVILFYGAITGVY). At 260 to 272 (MSPLSNHSTEKDS) the chain is on the extracellular side. A glycan (N-linked (GlcNAc...) asparagine) is linked at Asn-265. The helical transmembrane segment at 273–292 (AASVIFMVVAPVLNPFIYSL) threads the bilayer. The Cytoplasmic portion of the chain corresponds to 293–337 (RNNELKGTLKKTLSRPGAVAHACNPSTLGGRGGWIMRSGDRDHPG).

This sequence belongs to the G-protein coupled receptor 1 family.

The protein resides in the cell membrane. Odorant receptor. This Homo sapiens (Human) protein is Putative olfactory receptor 1F12P.